Consider the following 391-residue polypeptide: MSIVRMTDLDLSGKRVLIRQDLNVPIDNGQITSEQRITASVPTIKLALEKGAAVMVTSHLGRPKEGSWTEEDSLAPVATRLAALLGVDVPLVRDWVDGVEVAPGQVVLLENCRMNVGEGKDDQTLARKYAALCDVFVMDAFGTAHRAQASTHGVIRFAPVAAGGPLLMAELDALAKALDNPAKPLLAIVAGSKVSTKLELLSNLVNKVDQLIVGGGIANTFIAAAGHHVGKSLNEPDLIPTANQIVADAKTRGAEIPLPTDVVVAKQFLPDAEASVKALDAVDADDLILDIGPQTAQRYAELIASAGTVVWNGPVGVFEFESFSHGTETLARAIASSKAFSIAGGGDTLAAVDKYDIAKDVTYISTGGGAFLEFLEGKTLPAVAALQARGQ.

Substrate is bound by residues 21–23 (DLN), Arg-36, 59–62 (HLGR), Arg-113, and Arg-146. ATP contacts are provided by residues Lys-197, Glu-319, and 345–348 (GGDT).

The protein belongs to the phosphoglycerate kinase family. Monomer.

The protein resides in the cytoplasm. The catalysed reaction is (2R)-3-phosphoglycerate + ATP = (2R)-3-phospho-glyceroyl phosphate + ADP. Its pathway is carbohydrate degradation; glycolysis; pyruvate from D-glyceraldehyde 3-phosphate: step 2/5. The chain is Phosphoglycerate kinase from Xanthomonas oryzae pv. oryzae (strain MAFF 311018).